Reading from the N-terminus, the 127-residue chain is MTNIGKCMQGYLDEQFMELEELQDDANPNFVEEVSALYFKDSARLINNIDQALERGSFDFNRLDSYMHQFKGSSTSIGASKVKAECTTFREYCRAGNAEGCLRTFQQLKKEHSTLRKKLEHYFQASQ.

An HPt domain is found at 27-122 (NPNFVEEVSA…STLRKKLEHY (96 aa)). The residue at position 68 (His68) is a Phosphohistidine.

In terms of assembly, interacts with the B-type response regulators ARR1 and ARR2. Post-translationally, two-component system major event consists of a His-to-Asp phosphorelay between a sensor histidine kinase (HK) and a response regulator (RR). In plants, the His-to-Asp phosphorelay involves an additional intermediate named Histidine-containing phosphotransfer protein (HPt). This multistep phosphorelay consists of a His-Asp-His-Asp sequential transfer of a phosphate group between first a His and an Asp of the HK protein, followed by the transfer to a conserved His of the HPt protein and finally the transfer to an Asp in the receiver domain of the RR protein. Predominantly expressed in aerial parts of the plant.

Its subcellular location is the cytoplasm. The protein resides in the cytosol. It localises to the nucleus. Functions as a two-component phosphorelay mediator between cytokinin sensor histidine kinases and response regulators (B-type ARRs). Plays an important role in propagating cytokinin signal transduction through the multistep His-to-Asp phosphorelay. In Arabidopsis thaliana (Mouse-ear cress), this protein is Histidine-containing phosphotransfer protein 4 (AHP4).